Here is a 554-residue protein sequence, read N- to C-terminus: Malate synthase 2 (554 aa).

The active-site Proton acceptor is the Arg-177. The active-site Proton donor is the Asp-457. Residues 552-554 carry the SKL peroxisome targeting motif motif; the sequence is SKL.

This sequence belongs to the malate synthase family. In terms of assembly, interacts with PEX9.

Its subcellular location is the peroxisome matrix. It carries out the reaction glyoxylate + acetyl-CoA + H2O = (S)-malate + CoA + H(+). In terms of biological role, allantoin metabolism-specific malate synthase involved in the recycling the glyoxylate generated during allantoin degradation by the ureidoglycollate (UG) hydrolase reaction. The protein is Malate synthase 2 of Saccharomyces cerevisiae (strain ATCC 204508 / S288c) (Baker's yeast).